The sequence spans 869 residues: Dimethylglycine dehydrogenase, mitochondrial (869 aa).

The N-terminal 43 residues, 1-43 (MLRPGALRLRGLALRGSPRRPSSAGLREGQESPASPPEWKDRA), are a transit peptide targeting the mitochondrion. Residues 14–39 (LRGSPRRPSSAGLREGQESPASPPEW) are disordered. Residues 52 to 53 (CV), 73 to 74 (EK), and 80 to 88 (GSTWHAAGL) each bind FAD. Tele-8alpha-FAD histidine is present on His84. Lys107 carries the post-translational modification N6-acetyllysine. An N6-acetyllysine; alternate modification is found at Lys141. N6-succinyllysine; alternate is present on Lys141. The residue at position 161 (Lys161) is an N6-acetyllysine. Residue Val212 participates in FAD binding. Position 216 is an N6-acetyllysine (Lys216). Trp244 contacts FAD. Residues Lys310 and Lys312 each carry the N6-succinyllysine modification. 2 positions are modified to N6-acetyllysine: Lys328 and Lys353. 390–395 (FGYGII) contributes to the FAD binding site. 3 positions are modified to N6-acetyllysine; alternate: Lys427, Lys469, and Lys516. Residues Lys427, Lys469, and Lys516 each carry the N6-succinyllysine; alternate modification. (6S)-5,6,7,8-tetrahydrofolate is bound at residue 573 to 575 (ELT). Lys648 is subject to N6-acetyllysine; alternate. An N6-succinyllysine; alternate modification is found at Lys648. (6S)-5,6,7,8-tetrahydrofolate contacts are provided by residues Tyr669, 676-678 (ELY), and Tyr737. Residue Lys757 is modified to N6-acetyllysine. Lys786 is subject to N6-acetyllysine; alternate. Lys786 bears the N6-succinyllysine; alternate mark. Residue Lys788 is modified to N6-succinyllysine.

This sequence belongs to the GcvT family. Requires FAD as cofactor.

The protein resides in the mitochondrion. It catalyses the reaction (6S)-5,6,7,8-tetrahydrofolyl-(gamma-L-Glu)(n) + N,N-dimethylglycine + oxidized [electron-transfer flavoprotein] + H(+) = (6R)-5,10-methylenetetrahydrofolyl-(gamma-L-Glu)(n) + sarcosine + reduced [electron-transfer flavoprotein]. It functions in the pathway amine and polyamine degradation; betaine degradation; sarcosine from betaine: step 2/2. Its function is as follows. Catalyzes the demethylation of N,N-dimethylglycine to sarcosine. Also has activity with sarcosine in vitro. This chain is Dimethylglycine dehydrogenase, mitochondrial (Dmgdh), found in Mus musculus (Mouse).